The following is a 546-amino-acid chain: Probable protein kinase UbiB (546 aa).

In terms of domain architecture, Protein kinase spans 123–501 (DFQEIPLASA…RTNHGQALFL (379 aa)). ATP is bound by residues 129-137 (LASASISQV) and Lys152. Asp287 functions as the Proton acceptor in the catalytic mechanism. Transmembrane regions (helical) follow at residues 497-517 (QALF…FLYI) and 521-541 (YLKI…TIGW).

It belongs to the ABC1 family. UbiB subfamily.

It is found in the cell inner membrane. Its pathway is cofactor biosynthesis; ubiquinone biosynthesis [regulation]. Its function is as follows. Is probably a protein kinase regulator of UbiI activity which is involved in aerobic coenzyme Q (ubiquinone) biosynthesis. This is Probable protein kinase UbiB from Blochmanniella pennsylvanica (strain BPEN).